The following is a 265-amino-acid chain: Cytochrome c oxidase subunit 3 (265 aa).

6 helical membrane-spanning segments follow: residues 41–61 (GGAR…FVWW), 85–105 (GFIL…WAFF), 137–157 (TLIL…ILAG), 162–182 (AVYA…FQGM), 200–220 (FFLA…FLII), and 245–265 (WHFV…WGGI).

Belongs to the cytochrome c oxidase subunit 3 family. As to quaternary structure, component of the cytochrome c oxidase (complex IV, CIV), a multisubunit enzyme composed of a catalytic core of 3 subunits and several supernumerary subunits. The complex exists as a monomer or a dimer and forms supercomplexes (SCs) in the inner mitochondrial membrane with ubiquinol-cytochrome c oxidoreductase (cytochrome b-c1 complex, complex III, CIII).

It is found in the mitochondrion inner membrane. It carries out the reaction 4 Fe(II)-[cytochrome c] + O2 + 8 H(+)(in) = 4 Fe(III)-[cytochrome c] + 2 H2O + 4 H(+)(out). Functionally, component of the cytochrome c oxidase, the last enzyme in the mitochondrial electron transport chain which drives oxidative phosphorylation. The respiratory chain contains 3 multisubunit complexes succinate dehydrogenase (complex II, CII), ubiquinol-cytochrome c oxidoreductase (cytochrome b-c1 complex, complex III, CIII) and cytochrome c oxidase (complex IV, CIV), that cooperate to transfer electrons derived from NADH and succinate to molecular oxygen, creating an electrochemical gradient over the inner membrane that drives transmembrane transport and the ATP synthase. Cytochrome c oxidase is the component of the respiratory chain that catalyzes the reduction of oxygen to water. Electrons originating from reduced cytochrome c in the intermembrane space (IMS) are transferred via the dinuclear copper A center (CU(A)) of subunit 2 and heme A of subunit 1 to the active site in subunit 1, a binuclear center (BNC) formed by heme A3 and copper B (CU(B)). The BNC reduces molecular oxygen to 2 water molecules using 4 electrons from cytochrome c in the IMS and 4 protons from the mitochondrial matrix. This chain is Cytochrome c oxidase subunit 3 (COX3), found in Arabidopsis thaliana (Mouse-ear cress).